Reading from the N-terminus, the 850-residue chain is Pierisin (850 aa).

3 consecutive Ricin B-type lectin domains span residues 267–409, 413–560, and 564–707; these read GEFM…WNII, FRPI…WDIK, and YQYV…WYLK.

This sequence belongs to the pierisin ADP-ribosyltransferase family.

The enzyme catalyses a 2'-deoxyguanosine in DNA + NAD(+) = an N(2)-(ADP-L-ribosyl)-2'-deoxyguanosine in DNA + nicotinamide + H(+). In terms of biological role, ADP-ribosylates double-stranded DNA by targeting the N2 amino group of dG residues. Induces apoptosis in a range of human cell lines. May play a role in destroying cells during pupation and/or defense against parasites. The polypeptide is Pierisin (Pieris brassicae (White butterfly)).